The sequence spans 474 residues: PRAME family member 10 (474 aa).

An LRR 1; degenerate repeat occupies 97-124 (RWKLQVLDLRDVDENFWTIWSGARVLSC). Residues 179–203 (HLCCSKVQNYSMPTSSFRNLLERIY) form an LRR 2; degenerate repeat. An LRR 3; degenerate repeat occupies 204–230 (PDSIQELEVWKKCSLNKTGKFAPYLSQ). One copy of the LRR 4; degenerate repeat lies at 231 to 265 (MSNLRELFLAFGYERELYVSVQWPCIPDLDSPFLC). 5 LRR repeats span residues 266–291 (LYYPQMLYIKKISNIKEHLEHLLRYL), 292–323 (KNPLGAFIFSDAYLTDRDMECLSQYPSLSQLK), 324–342 (ELRLIHILMWTTNLEPLGV), 348–375 (AATLKTLVLKDCRIQDPQLRVLLPALSH), and 376–400 (CSQLTTFNFHGNETSMNALKDLLRH).

This sequence belongs to the PRAME family.

This is PRAME family member 10 from Homo sapiens (Human).